A 988-amino-acid chain; its full sequence is RecQ-like DNA helicase blm-1 (988 aa).

Residues 46-119 (CEEREEEYID…QFPSRPQKRL (74 aa)) are disordered. 2 tandem repeats follow at residues 121 to 129 (DPPIVDLDE) and 130 to 138 (EPPIVDLDD). The 2 X 9 AA tandem repeats of [DE]-P-P-I-V-D-L-D-[ED] stretch occupies residues 121–138 (DPPIVDLDEEPPIVDLDD). The tract at residues 148 to 185 (TSEEVVSGDIAPEEEEEEGHDSFDDFESVPAQPPSKNT) is disordered. Positions 158–174 (APEEEEEEGHDSFDDFE) are enriched in acidic residues. Residues 248–252 (FRHRQ) and 272–276 (GAGKS) contribute to the ATP site. Positions 256-433 (ILSTLMGHDT…RDHLKMQNSK (178 aa)) constitute a Helicase ATP-binding domain. The DEAH box motif lies at 375-378 (DEAH). The 146-residue stretch at 458-603 (NVVEKMKQLY…VRSMHLNNVL (146 aa)) folds into the Helicase C-terminal domain. The interval 478-480 (SRK) is 3' overhang DNA-binding. Arg562 is an ATP binding site. The segment at 580-583 (RLRR) is 3' overhang DNA-binding. Cys615, Cys633, Cys640, and Cys643 together coordinate Zn(2+). 3 3' overhang DNA-binding regions span residues 676-678 (TLK), 687-691 (ALIKK), and 736-742 (YSVPNQA). An HRDC domain is found at 807–888 (GDVFTRCLQD…ATYWKQVDER (82 aa)). The disordered stretch occupies residues 930–988 (GGGGCRGRGKKRAFSGFSSGRATKKPRATAPSARGKTSGRGGAKPATSLKRNMYPATSM). The short motif at 939-955 (KKRAFSGFSSGRATKKP) is the Nuclear localization signal element.

The protein belongs to the helicase family. RecQ subfamily. In terms of assembly, monomer. Homodimer (via N-terminus). Homotetramer (via N-terminus); dimer of dimers. Homohexamer (via N-terminus). Self-association negatively regulates DNA unwinding amplitude and rate. Oligomer forms dissociate into monomer in presence of ATP. Component of the BTR double Holliday Junction dissolution complex composed of at least him-6, top-3, rmh-1 and rmif-2, which is involved in double strand break repair in the germline. May interact with rmh-1; the interaction is required for mutual stability and localization at nuclear foci. Forms a complex composed of cdc-48.1, him-6 and crp-1; within the complex, interacts with cdc-48.1. Zn(2+) serves as cofactor.

It is found in the nucleus. It localises to the chromosome. The enzyme catalyses Couples ATP hydrolysis with the unwinding of duplex DNA by translocating in the 3'-5' direction.. It carries out the reaction ATP + H2O = ADP + phosphate + H(+). Functionally, component of the BTR double Holliday Junction dissolution complex, which is involved in homologous recombination during meiotic double strand break in the germline. Stabilizes and positively regulates the localization of the BTR double Holliday Junction dissolution complex component rmh-1 at nuclear foci during meiotic recombination. Participates in DNA replication and repair. Exhibits a magnesium-dependent ATP-dependent DNA-helicase activity that unwinds single- and double-stranded DNA in a 3'-5' direction. Negatively regulates sister chromatid exchange (SCE). ATP-dependent DNA helicase that unwinds single- and double-stranded DNA in a 3'-5' direction. Participates in DNA replication and repair. Negatively regulates sister chromatid exchange (SCE). Stimulates DNA 4-way junction branch migration and DNA Holliday junction dissolution. Binds single-stranded DNA (ssDNA), forked duplex DNA and DNA Holliday junction. This chain is RecQ-like DNA helicase blm-1, found in Caenorhabditis elegans.